The chain runs to 363 residues: tRNA/tmRNA (uracil-C(5))-methyltransferase (363 aa).

Gln187, Tyr215, Asn220, Glu236, and Asp296 together coordinate S-adenosyl-L-methionine. Catalysis depends on Cys321, which acts as the Nucleophile. Glu355 (proton acceptor) is an active-site residue.

It belongs to the class I-like SAM-binding methyltransferase superfamily. RNA M5U methyltransferase family. TrmA subfamily.

It catalyses the reaction uridine(54) in tRNA + S-adenosyl-L-methionine = 5-methyluridine(54) in tRNA + S-adenosyl-L-homocysteine + H(+). It carries out the reaction uridine(341) in tmRNA + S-adenosyl-L-methionine = 5-methyluridine(341) in tmRNA + S-adenosyl-L-homocysteine + H(+). Functionally, dual-specificity methyltransferase that catalyzes the formation of 5-methyluridine at position 54 (m5U54) in all tRNAs, and that of position 341 (m5U341) in tmRNA (transfer-mRNA). The sequence is that of tRNA/tmRNA (uracil-C(5))-methyltransferase from Haemophilus influenzae (strain PittEE).